The chain runs to 319 residues: Beta-ketoacyl-[acyl-carrier-protein] synthase III (319 aa).

Active-site residues include Cys114 and His246. The segment at 247–251 is ACP-binding; it reads QANIR. The active site involves Asn276.

The protein belongs to the thiolase-like superfamily. FabH family. Homodimer.

It is found in the cytoplasm. It carries out the reaction malonyl-[ACP] + acetyl-CoA + H(+) = 3-oxobutanoyl-[ACP] + CO2 + CoA. It participates in lipid metabolism; fatty acid biosynthesis. Functionally, catalyzes the condensation reaction of fatty acid synthesis by the addition to an acyl acceptor of two carbons from malonyl-ACP. Catalyzes the first condensation reaction which initiates fatty acid synthesis and may therefore play a role in governing the total rate of fatty acid production. Possesses both acetoacetyl-ACP synthase and acetyl transacylase activities. Its substrate specificity determines the biosynthesis of branched-chain and/or straight-chain of fatty acids. The polypeptide is Beta-ketoacyl-[acyl-carrier-protein] synthase III (Thiobacillus denitrificans (strain ATCC 25259 / T1)).